The sequence spans 454 residues: MRGEVVHIHLGQAGTQLGNSAWELYLLEHGLTQDGRKDPDSTVAGEGGSYDTFFTESSNGKYVPRSLFVDLDPSPIDEIRTGPYRQLFHPELLISGKEDAANNYARGHYTVGKEMAENVLDRIRKITDNCHSLQGFLVFHSFGGGTGSGFGALVLERLAQDYAKKCKLEFSVYPAPRVATAVVEPYNAVLATHSTLEHSDVTFLVDNEAVYDICRRNLDIPRPSYEHLNRLIAQVVSSITSSLRFDGALNVDLNEFQTNLVPFPRVHYPLISYAPVISATKSAHESFKTSELTLQCFEPNNQMVVCDPRNGKYMAVALLYRGDVVPRDTSAAVAALKAKSSFNLVEWCPTGFKIGINHQKPMSVPTASPADGGLASVDRSVSMLSNTTAIAEAWSRLDHKFDLMYSKRAFVHWYVGEGMEEGEFSEAREDLASLEKDYEEVAGDYNDVDVDAEY.

Positions 12, 72, 141, 145, 146, 180, 207, and 229 each coordinate GTP. Mg(2+) is bound at residue Asp-72. Glu-255 is a catalytic residue.

It belongs to the tubulin family. In terms of assembly, dimer of alpha and beta chains. A typical microtubule is a hollow water-filled tube with an outer diameter of 25 nm and an inner diameter of 15 nM. Alpha-beta heterodimers associate head-to-tail to form protofilaments running lengthwise along the microtubule wall with the beta-tubulin subunit facing the microtubule plus end conferring a structural polarity. Microtubules usually have 13 protofilaments but different protofilament numbers can be found in some organisms and specialized cells. Requires Mg(2+) as cofactor.

The protein localises to the cytoplasm. It localises to the cytoskeleton. The catalysed reaction is GTP + H2O = GDP + phosphate + H(+). In terms of biological role, tubulin is the major constituent of microtubules, a cylinder consisting of laterally associated linear protofilaments composed of alpha- and beta-tubulin heterodimers. Microtubules grow by the addition of GTP-tubulin dimers to the microtubule end, where a stabilizing cap forms. Below the cap, tubulin dimers are in GDP-bound state, owing to GTPase activity of alpha-tubulin. This Neurospora crassa (strain ATCC 24698 / 74-OR23-1A / CBS 708.71 / DSM 1257 / FGSC 987) protein is Tubulin alpha-A chain (tba-1).